The following is a 265-amino-acid chain: Serine protease harobin (265 aa).

The signal sequence occupies residues 1–18 (MPLIRVLASLLILQLSYG). Residues 19 to 33 (KSLDNGAKAITSLDR) constitute a propeptide that is removed on maturation. The region spanning 34-257 (IIGGFECNPS…YKDWIEGIIA (224 aa)) is the Peptidase S1 domain. 7 cysteine pairs are disulfide-bonded: Cys-40–Cys-172, Cys-59–Cys-75, Cys-106–Cys-152, Cys-107–Cys-264, Cys-151–Cys-218, Cys-183–Cys-197, and Cys-208–Cys-233. Catalysis depends on His-74, which acts as the Charge relay system. Residue Asn-112 is glycosylated (N-linked (GlcNAc...) asparagine). The active-site Charge relay system is the Asp-119. Asn-130 is a glycosylation site (N-linked (GlcNAc...) asparagine). Ser-212 serves as the catalytic Charge relay system.

The protein belongs to the peptidase S1 family. Snake venom subfamily. Monomer. In terms of processing, harobin contains three additional Cys residues than other snake venom serine proteases, suggesting an additional disulfide bond. In addition, it is more stable than other snake 6-disulfide-bond serine proteases, since it is less sensitive to DTT. In terms of tissue distribution, expressed by the venom gland.

It is found in the secreted. Inhibited by PMSF. Functionally, serine protein with fibrinolytic and fibrinogenolytic activities. Degrades Bbeta-chain (FGB) of fibrinogen first and then the Aalpha-chain (FGA). Gamma-chain (FGG) are also digested on prolonged incubation. In vitro, it cleaves high molecular weight (HMW) kininogen (KNG) releasing bradykinin that promotes vasodilation. In vitro and in vivo, it cleaves angiotensin-2 (AGT). This explains the reduction of blood pressure in hypertensive rats. Also has antithrombotic effects on thrombosis animal models. The chain is Serine protease harobin from Hydrophis hardwickii (Hardwick's spine-bellied seasnake).